We begin with the raw amino-acid sequence, 115 residues long: MGTRLLCWVVLGFLGTDHTGAGVSQSPRYKVAKRGQDVALRCDPISGHVSLFWYQQALGQGPEFLTYFQNEAQLDKSGLPSDRFFAERPEGSVSTLKIQRTQQEDSAVYLCASSL.

The signal sequence occupies residues 1–21 (MGTRLLCWVVLGFLGTDHTGA). The Ig-like domain maps to 22–115 (GVSQSPRYKV…SAVYLCASSL (94 aa)). Cysteines 42 and 111 form a disulfide.

As to quaternary structure, alpha-beta TR is a heterodimer composed of an alpha and beta chain; disulfide-linked. The alpha-beta TR is associated with the transmembrane signaling CD3 coreceptor proteins to form the TR-CD3 (TcR or TCR). The assembly of alpha-beta TR heterodimers with CD3 occurs in the endoplasmic reticulum where a single alpha-beta TR heterodimer associates with one CD3D-CD3E heterodimer, one CD3G-CD3E heterodimer and one CD247 homodimer forming a stable octameric structure. CD3D-CD3E and CD3G-CD3E heterodimers preferentially associate with TR alpha and TR beta chains, respectively. The association of the CD247 homodimer is the last step of TcR assembly in the endoplasmic reticulum and is required for transport to the cell surface.

The protein localises to the cell membrane. Functionally, v region of the variable domain of T cell receptor (TR) beta chain that participates in the antigen recognition. Alpha-beta T cell receptors are antigen specific receptors which are essential to the immune response and are present on the cell surface of T lymphocytes. Recognize peptide-major histocompatibility (MH) (pMH) complexes that are displayed by antigen presenting cells (APC), a prerequisite for efficient T cell adaptive immunity against pathogens. Binding of alpha-beta TR to pMH complex initiates TR-CD3 clustering on the cell surface and intracellular activation of LCK that phosphorylates the ITAM motifs of CD3G, CD3D, CD3E and CD247 enabling the recruitment of ZAP70. In turn ZAP70 phosphorylates LAT, which recruits numerous signaling molecules to form the LAT signalosome. The LAT signalosome propagates signal branching to three major signaling pathways, the calcium, the mitogen-activated protein kinase (MAPK) kinase and the nuclear factor NF-kappa-B (NF-kB) pathways, leading to the mobilization of transcription factors that are critical for gene expression and essential for T cell growth and differentiation. The T cell repertoire is generated in the thymus, by V-(D)-J rearrangement. This repertoire is then shaped by intrathymic selection events to generate a peripheral T cell pool of self-MH restricted, non-autoaggressive T cells. Post-thymic interaction of alpha-beta TR with the pMH complexes shapes TR structural and functional avidity. This chain is T cell receptor beta variable 7-8, found in Homo sapiens (Human).